The following is a 1381-amino-acid chain: MEVLMAERADLVFHNKVIDGTAMKRLISRLIDHFGMAYTSHILDQVKTMGFQQATATSISLGIDDLLTIPSKGWLVQDAEQQSLILEKHHHYGNVHAVEKLRQSIEIWYATSEYLRQEMHPNFRMTDPSNPVHIMSFSGARGNASQVHQLVGMRGLMSDPQGQMIDLPIQSNLREGLSLTEYLISCYGARKGVVDTAVRTSDAGYLTRRLVEVVQHIVVRRTDCGTIRGISVSPRNGIGMTEKMLIQTLIGRVLADDIYMGLRCIAARNQDIGVGLVNRFIAFRAQSIYIRTPFICRSTSWICRLCYGRSPTHGDLVELGEAVGIIAGQSIGEPGTQLTLRTFHTGGVFTGGTAEHVRAPFNGKIKFNEDLVHPTRTRHGHPAFLCYIDLYVTIESQDILHNVNIPPKSFLLVQNDQYVESEQVIAEIRARTSTFNFKERVRKHIYSDSEGEMHWSTDVYHAPEYTYGNVHLLPKTSHLWILSGGPRRSSLVPFSLHKDQDQMNIHSLSVEQRESSDLSVTNDRARHKLFSSDPSGKKEGKILDYSGPARIISNGHWNFIYPAILHENSYLLAKRRRNRFIIPFQYDQEREKELMPRSGISIEIPINGILRRNSILAYFDDPRYRRSSSGITKYGTVEVDSIVKKEDLIEYRGAKEFSPKYQMKVDRFFFIPEEVHILPGSSSIMVRNNSIIGVDTRITLNTRSRIGGLVRVERKKKRIELKIFSGDIHFPGEADKISRHSGILIPPGTGKKNSKESKKLQNWIYVQRITPTKKKYFVSVRPVVTYEIADGINLATLFPQDLLQERDNVKFRVVNSILYRNGKPIRGIYYTSIQLVRTCLVLNWDQDRNGSIEKVKASIVEVRANDLIRDFIRIDLVKSPISYTGKRNDMAGSGLIPDNGSDHTNINPFYSKVRRIQSLTQHQGTIRTLLNRNKECQSFLILSSSNCSRIGPFNGSKSHNVTKESIQIKEDPMIPIRNSLGPLGTVPKIANFDSPYYLITHNQILLNKYLLLDNLKQTFQVLKYYLMDENGRIYNPYPCRNIIFHPFDLTWCFLHHDYCEKTSTIIVLGQFICENENVCISKYGPQIKSGQVLIVHVDSLVIRSAKPHLATPGATVHGHYGEILYEGDTLVTFIYEKSRSGDITQGLPKVEQVLEVRSVDSISMNLEKRVEGWNEHIKRILGIPWGFLIGAELTIAQSRISLVNKIQKVYRSQGVQIHNRHIEIIVRQITSKVLVSEDGMSNVFSPGELIGLLRAERTGRSLEEAICYRAILWGITRASLNTQSFISEASFQETARVLAKAALRGRIDWLKGLKENVVLGGMIPVGTGFKGLVHRSRQDNNIPLEIKKKNLFEGEIRDILFHHRELFGSCIPNNFHNTPEQ.

Zn(2+) is bound by residues Cys-224, Cys-296, Cys-303, and Cys-306.

The protein belongs to the RNA polymerase beta' chain family. RpoC2 subfamily. In plastids the minimal PEP RNA polymerase catalytic core is composed of four subunits: alpha, beta, beta', and beta''. When a (nuclear-encoded) sigma factor is associated with the core the holoenzyme is formed, which can initiate transcription. Zn(2+) is required as a cofactor.

It localises to the plastid. The protein resides in the chloroplast. It catalyses the reaction RNA(n) + a ribonucleoside 5'-triphosphate = RNA(n+1) + diphosphate. In terms of biological role, DNA-dependent RNA polymerase catalyzes the transcription of DNA into RNA using the four ribonucleoside triphosphates as substrates. The chain is DNA-directed RNA polymerase subunit beta'' from Drimys granadensis.